The primary structure comprises 357 residues: GTPase Obg (357 aa).

One can recognise an Obg domain in the interval 1–159; the sequence is MKFVDEAFID…RNLKLELKVL (159 aa). Residues 160-334 form the OBG-type G domain; it reads ADVGLLGMPN…LIQAIYQHVR (175 aa). Residues 166–173, 191–195, 213–216, 284–287, and 315–317 each bind GTP; these read GMPNAGKS, FTTLH, DIPG, NKLD, and SAL. Ser173 and Thr193 together coordinate Mg(2+).

This sequence belongs to the TRAFAC class OBG-HflX-like GTPase superfamily. OBG GTPase family. As to quaternary structure, monomer. Requires Mg(2+) as cofactor.

It is found in the cytoplasm. Functionally, an essential GTPase which binds GTP, GDP and possibly (p)ppGpp with moderate affinity, with high nucleotide exchange rates and a fairly low GTP hydrolysis rate. Plays a role in control of the cell cycle, stress response, ribosome biogenesis and in those bacteria that undergo differentiation, in morphogenesis control. This is GTPase Obg from Paracidovorax citrulli (strain AAC00-1) (Acidovorax citrulli).